The primary structure comprises 86 residues: Muscarinic toxin 38 (86 aa).

Positions methionine 1–threonine 21 are cleaved as a signal peptide. Disulfide bonds link cysteine 24–cysteine 45, cysteine 38–cysteine 63, cysteine 67–cysteine 78, and cysteine 79–cysteine 84.

It belongs to the three-finger toxin family. Short-chain subfamily. Aminergic toxin sub-subfamily. In terms of assembly, monomer. Expressed by the venom gland.

Its subcellular location is the secreted. Functionally, binds to the muscarinic acetylcholine receptor (CHRM). This Ophiophagus hannah (King cobra) protein is Muscarinic toxin 38.